Reading from the N-terminus, the 232-residue chain is Clarin-1 (232 aa).

The chain crosses the membrane as a helical span at residues 8–28 (IIFCMAGVFSFACALGVVTAL). An N-linked (GlcNAc...) asparagine glycan is attached at Asn-48. Transmembrane regions (helical) follow at residues 101–121 (IILF…FFMY) and 135–155 (LGLY…MILF). Asn-184 carries N-linked (GlcNAc...) asparagine glycosylation. A helical transmembrane segment spans residues 186–206 (TTSFWVVFICFFVHFLNGLLI).

This sequence belongs to the clarin family.

The protein resides in the cell membrane. Its function is as follows. May have a role in the excitatory ribbon synapse junctions between hair cells and cochlear ganglion cells and presumably also in analogous synapses within the retina. The protein is Clarin-1 (Clrn1) of Rattus norvegicus (Rat).